Reading from the N-terminus, the 347-residue chain is Outer membrane protein A (347 aa).

The signal sequence occupies residues 1 to 21 (MKKQALTIIFLLVSLVTGIQA). The next 8 beta stranded transmembrane spans lie at 26 to 36 (HWYLGTKMGWS), 63 to 74 (APVFGLFLGYEF), 78 to 86 (FSFEIENDT), 105 to 116 (NSLQLATKLSYP), 121 to 129 (FHIYTQLGG), 154 to 163 (PNVSLGAEYI), 168 to 175 (FITRLDYT), and 194 to 202 (DVALSFGWK). The hinge-like stretch occupies residues 207 to 218 (NINEIFSSYIPQ). The OmpA-like domain occupies 220–347 (SDKQYVALNE…RRVEIEVLSD (128 aa)). Cysteine 321 and cysteine 333 form a disulfide bridge.

Belongs to the outer membrane OOP (TC 1.B.6) superfamily. OmpA family. As to quaternary structure, monomer and homodimer.

The protein localises to the cell outer membrane. Its function is as follows. With TolR probably plays a role in maintaining the position of the peptidoglycan cell wall in the periplasm. Acts as a porin with low permeability that allows slow penetration of small solutes; an internal gate slows down solute passage. The sequence is that of Outer membrane protein A from Buchnera aphidicola subsp. Schizaphis graminum (strain Sg).